Consider the following 438-residue polypeptide: MATAASNPYLASSTILSSASLVHSESGGGGMQPGSGAVTSVSGGYRGDPTVKMVQSDFMQGAMAASNGGHMLSHAHQWVTSLPHAAAAAAAAAAAAAAEAGSPWSSSPVGMAGSPQQQDVKSSSNREDLHSGTALHHRPSHLGAHQSHQSAWGGTTASHISTITGGQQQSQQSLIYSQPGGFTVNGMLNPPGSLVHPGLMRGESPEMDHHHHHHHHQQQHPHHHHHHQHHAGVNSHDSHSDEDTPTSDDLEQFAKQFKQRRIKLGFTQADVGLALGTLYGNVFSQTTICRFEALQLSFKNMCKLKPLLNKWLEEADSTTGSPTSIDKIAAQGRKRKKRTSIEVSVKGALESHFLKCPKPSAQEITSLADNLQLEKEVVRVWFCNRRQKEKRMTPPGVPQTPEDVYTHAGNVSADTPPPSMDCKREFCGRLLKRCKFER.

Disordered regions lie at residues 22 to 43 (VHSESGGGGMQPGSGAVTSVSG), 102 to 172 (SPWS…QSQQ), and 186 to 248 (GMLN…PTSD). 2 stretches are compositionally biased toward polar residues: residues 103 to 123 (PWSSSPVGMAGSPQQQDVKSS) and 146 to 159 (QSHQSAWGGTTASH). The span at 160-172 (ISTITGGQQQSQQ) shows a compositional bias: low complexity. Basic residues predominate over residues 210-230 (HHHHHHHQQQHPHHHHHHQHH). The region spanning 242 to 316 (EDTPTSDDLE…LLNKWLEEAD (75 aa)) is the POU-specific domain. Positions 334-393 (KRKKRTSIEVSVKGALESHFLKCPKPSAQEITSLADNLQLEKEVVRVWFCNRRQKEKRMT) form a DNA-binding region, homeobox.

The protein belongs to the POU transcription factor family. Class-3 subfamily. As to expression, predominantly expressed in the embryonic and adult central nervous system. In adults, isoform 2 is expressed in the brain, ovary, basal cells of the skin and muscle satellite cells.

The protein resides in the nucleus. Its function is as follows. Transcription factor that may play important roles in patterning the embryonic brain. The protein is POU domain, class 3, transcription factor 3-A (pou3f3a) of Danio rerio (Zebrafish).